A 308-amino-acid chain; its full sequence is Aspartate carbamoyltransferase catalytic subunit (308 aa).

2 residues coordinate carbamoyl phosphate: Arg-57 and Thr-58. An L-aspartate-binding site is contributed by Lys-86. Residues Arg-107, His-135, and Gln-138 each contribute to the carbamoyl phosphate site. L-aspartate contacts are provided by Arg-168 and Arg-229. The carbamoyl phosphate site is built by Leu-268 and Pro-269.

It belongs to the aspartate/ornithine carbamoyltransferase superfamily. ATCase family. In terms of assembly, heterooligomer of catalytic and regulatory chains.

The enzyme catalyses carbamoyl phosphate + L-aspartate = N-carbamoyl-L-aspartate + phosphate + H(+). The protein operates within pyrimidine metabolism; UMP biosynthesis via de novo pathway; (S)-dihydroorotate from bicarbonate: step 2/3. Functionally, catalyzes the condensation of carbamoyl phosphate and aspartate to form carbamoyl aspartate and inorganic phosphate, the committed step in the de novo pyrimidine nucleotide biosynthesis pathway. In Thermococcus gammatolerans (strain DSM 15229 / JCM 11827 / EJ3), this protein is Aspartate carbamoyltransferase catalytic subunit.